Here is a 454-residue protein sequence, read N- to C-terminus: Probable succinate-semialdehyde dehydrogenase [NADP(+)] (454 aa).

NADP(+) is bound by residues 130 to 131 (WN), 154 to 157 (KHAS), and 206 to 207 (GS). Glu-228 (proton acceptor) is an active-site residue. Leu-229 contributes to the NADP(+) binding site. The active-site Nucleophile is Cys-262. Glu-359 contacts NADP(+).

It belongs to the aldehyde dehydrogenase family.

It catalyses the reaction succinate semialdehyde + NADP(+) + H2O = succinate + NADPH + 2 H(+). It functions in the pathway amino-acid degradation; 4-aminobutanoate degradation. In terms of biological role, catalyzes the NADP(+) dependent oxidation of succinate semialdehyde to succinate. This Synechocystis sp. (strain ATCC 27184 / PCC 6803 / Kazusa) protein is Probable succinate-semialdehyde dehydrogenase [NADP(+)] (gabD).